We begin with the raw amino-acid sequence, 862 residues long: Phosphofurin acidic cluster sorting protein 2 (862 aa).

Disordered stretches follow at residues 151 to 215 (HEDS…TTSM), 263 to 436 (LDVE…TRSQ), and 658 to 713 (SSAT…SQGV). Positions 263-272 (LDVENPSDSG) are enriched in low complexity. The span at 313–328 (SHREPPSPADVPEKTR) shows a compositional bias: basic and acidic residues. Positions 332–344 (GKQQLSDSVSDTV) are enriched in polar residues. Phosphoserine is present on residues Ser361, Ser387, Ser424, Ser662, and Ser665. Low complexity-rich tracts occupy residues 658-693 (SSAT…KEAS) and 700-710 (PSVSGGLSSPS).

The protein belongs to the PACS family. As to quaternary structure, interacts with BID and PKD2. Interacts with SIRT1. Interacts with HDAC1. Interacts with TRPV1. Interacts with WDR37.

The protein resides in the endoplasmic reticulum. It is found in the mitochondrion. Functionally, multifunctional sorting protein that controls the endoplasmic reticulum (ER)-mitochondria communication, including the apposition of mitochondria with the ER and ER homeostasis. In addition, in response to apoptotic inducer, translocates BIB to mitochondria, which initiates a sequence of events including the formation of mitochondrial truncated BID, the release of cytochrome c, the activation of caspase-3 thereby causing cell death. May also involved in ion channel trafficking, directing acidic cluster-containing ion channels to distinct subcellular compartments. This Mus musculus (Mouse) protein is Phosphofurin acidic cluster sorting protein 2 (Pacs2).